The sequence spans 21 residues: Protein YmjD (21 aa).

The polypeptide is Protein YmjD (ymjD) (Escherichia coli (strain K12)).